The following is an 85-amino-acid chain: Large ribosomal subunit protein bL27 (85 aa).

This sequence belongs to the bacterial ribosomal protein bL27 family.

The sequence is that of Large ribosomal subunit protein bL27 from Campylobacter hominis (strain ATCC BAA-381 / DSM 21671 / CCUG 45161 / LMG 19568 / NCTC 13146 / CH001A).